The chain runs to 453 residues: Nuclear distribution protein PAC1-2 (453 aa).

The LisH domain maps to 9–41; the sequence is QADELHKSIVAYLTANNLSTTAATLREELSLGE. A coiled-coil region spans residues 63 to 87; it reads VVRLQKKVMDLESRSVALQSELEHS. The tract at residues 84-108 is disordered; that stretch reads LEHSTPASLSKRKDPTSWLPRSPPR. WD repeat units follow at residues 113 to 154, 156 to 196, 200 to 243, 246 to 285, 290 to 350, 352 to 391, and 396 to 448; these read SHQA…RTLK, HTRA…KNTR, GHDH…CIKT, GHTG…PESK, GHEN…IKTL, GHDN…RCVK, and AHGQ…DKVV.

This sequence belongs to the WD repeat LIS1/nudF family. As to quaternary structure, self-associates. Interacts with NDL1 and dynein.

The protein resides in the cytoplasm. It localises to the cytoskeleton. Its subcellular location is the spindle pole. Positively regulates the activity of the minus-end directed microtubule motor protein dynein. May enhance dynein-mediated microtubule sliding by targeting dynein to the microtubule plus end. Required for nuclear migration during vegetative growth as well as development. Required for retrograde early endosome (EE) transport from the hyphal tip. Required for localization of dynein to the mitotic spindle poles. Recruits additional proteins to the dynein complex at SPBs. The protein is Nuclear distribution protein PAC1-2 of Chaetomium globosum (strain ATCC 6205 / CBS 148.51 / DSM 1962 / NBRC 6347 / NRRL 1970) (Soil fungus).